Here is a 156-residue protein sequence, read N- to C-terminus: Ribosomal RNA large subunit methyltransferase H (156 aa).

S-adenosyl-L-methionine-binding positions include Leu-73, Gly-104, and 123–128; that span reads IGPLTL.

The protein belongs to the RNA methyltransferase RlmH family. As to quaternary structure, homodimer.

It is found in the cytoplasm. It catalyses the reaction pseudouridine(1915) in 23S rRNA + S-adenosyl-L-methionine = N(3)-methylpseudouridine(1915) in 23S rRNA + S-adenosyl-L-homocysteine + H(+). Functionally, specifically methylates the pseudouridine at position 1915 (m3Psi1915) in 23S rRNA. The sequence is that of Ribosomal RNA large subunit methyltransferase H from Stenotrophomonas maltophilia (strain K279a).